Here is a 224-residue protein sequence, read N- to C-terminus: Biotin transport ATP-binding protein BioM (224 aa).

Positions 3–224 (IQFESAGVSF…AIARYREIAA (222 aa)) constitute an ABC transporter domain. 34 to 41 (GLNGSGKT) lines the ATP pocket.

This sequence belongs to the ABC transporter superfamily. In terms of assembly, part of a biotin transporter complex composed of BioM, BioN and BioY.

It localises to the cell inner membrane. Its function is as follows. Involved in biotin uptake. This is Biotin transport ATP-binding protein BioM (bioM) from Rhizobium etli (strain ATCC 51251 / DSM 11541 / JCM 21823 / NBRC 15573 / CFN 42).